The following is a 359-amino-acid chain: 3-dehydroquinate synthase (359 aa).

NAD(+)-binding positions include 106–110 (GVVGD), 130–131 (TS), lysine 143, and lysine 152. Glutamate 185, histidine 246, and histidine 262 together coordinate Zn(2+).

This sequence belongs to the sugar phosphate cyclases superfamily. Dehydroquinate synthase family. NAD(+) serves as cofactor. Requires Co(2+) as cofactor. Zn(2+) is required as a cofactor.

The protein resides in the cytoplasm. The enzyme catalyses 7-phospho-2-dehydro-3-deoxy-D-arabino-heptonate = 3-dehydroquinate + phosphate. It participates in metabolic intermediate biosynthesis; chorismate biosynthesis; chorismate from D-erythrose 4-phosphate and phosphoenolpyruvate: step 2/7. In terms of biological role, catalyzes the conversion of 3-deoxy-D-arabino-heptulosonate 7-phosphate (DAHP) to dehydroquinate (DHQ). This is 3-dehydroquinate synthase from Lactiplantibacillus plantarum (strain ATCC BAA-793 / NCIMB 8826 / WCFS1) (Lactobacillus plantarum).